The sequence spans 842 residues: Elongation factor 2 (842 aa).

Residues 17-253 (TNVRNMSVIA…LWGDSYFNPK (237 aa)) form the tr-type G domain. GTP is bound by residues 26 to 33 (AHVDHGKS), 158 to 161 (NKVD), and 213 to 215 (SGL). At His-699 the chain carries Diphthamide.

It belongs to the TRAFAC class translation factor GTPase superfamily. Classic translation factor GTPase family. EF-G/EF-2 subfamily.

It localises to the cytoplasm. It catalyses the reaction GTP + H2O = GDP + phosphate + H(+). Its function is as follows. Catalyzes the GTP-dependent ribosomal translocation step during translation elongation. During this step, the ribosome changes from the pre-translocational (PRE) to the post-translocational (POST) state as the newly formed A-site-bound peptidyl-tRNA and P-site-bound deacylated tRNA move to the P and E sites, respectively. Catalyzes the coordinated movement of the two tRNA molecules, the mRNA and conformational changes in the ribosome. The sequence is that of Elongation factor 2 (EFT1) from Kluyveromyces lactis (strain ATCC 8585 / CBS 2359 / DSM 70799 / NBRC 1267 / NRRL Y-1140 / WM37) (Yeast).